The primary structure comprises 1433 residues: DNA-directed RNA polymerase subunit beta' (1433 aa).

Cys66, Cys68, Cys81, and Cys84 together coordinate Zn(2+). Mg(2+) is bound by residues Asp474, Asp476, and Asp478. Residues Cys823, Cys897, Cys904, and Cys907 each contribute to the Zn(2+) site.

Belongs to the RNA polymerase beta' chain family. The RNAP catalytic core consists of 2 alpha, 1 beta, 1 beta' and 1 omega subunit. When a sigma factor is associated with the core the holoenzyme is formed, which can initiate transcription. It depends on Mg(2+) as a cofactor. Zn(2+) is required as a cofactor.

The catalysed reaction is RNA(n) + a ribonucleoside 5'-triphosphate = RNA(n+1) + diphosphate. DNA-dependent RNA polymerase catalyzes the transcription of DNA into RNA using the four ribonucleoside triphosphates as substrates. This Amoebophilus asiaticus (strain 5a2) protein is DNA-directed RNA polymerase subunit beta'.